An 88-amino-acid polypeptide reads, in one-letter code: Small ribosomal subunit protein bS20 (88 aa).

It belongs to the bacterial ribosomal protein bS20 family.

Functionally, binds directly to 16S ribosomal RNA. In Nitrobacter winogradskyi (strain ATCC 25391 / DSM 10237 / CIP 104748 / NCIMB 11846 / Nb-255), this protein is Small ribosomal subunit protein bS20.